A 201-amino-acid chain; its full sequence is Regulator of G-protein signaling rgs-1 (201 aa).

Residues 37-156 (SWQQSFDTLM…FLTSIFYRET (120 aa)) form the RGS domain. The segment at 168-201 (GGDEEKEREQRAERARLNVPATAAEGSSKDISMV) is disordered. The segment covering 170–183 (DEEKEREQRAERAR) has biased composition (basic and acidic residues).

As to expression, expressed in most or all neurons.

Functionally, inhibits G protein signaling in nervous system, interacting preferentially with the G(O) subfamily member goa-1. In vitro, protein acts as a GTPase activator of goa-1. Rgs-1 and rgs-2 redundantly adjust signaling when worms are fed to allow rapid induction of egg-laying behavior. This is Regulator of G-protein signaling rgs-1 (rgs-1) from Caenorhabditis elegans.